Reading from the N-terminus, the 107-residue chain is Iron-sulfur cluster assembly protein CyaY (107 aa).

The protein belongs to the frataxin family.

Involved in iron-sulfur (Fe-S) cluster assembly. May act as a regulator of Fe-S biogenesis. This is Iron-sulfur cluster assembly protein CyaY from Neisseria meningitidis serogroup A / serotype 4A (strain DSM 15465 / Z2491).